The primary structure comprises 537 residues: Prolyl 4-hydroxylase subunit alpha-2 (537 aa).

The signal sequence occupies residues 1–23; that stretch reads MKLQVLVLVLLMSWFGVLSWVQA. The N-linked (GlcNAc...) asparagine glycan is linked to Asn-117. The TPR repeat unit spans residues 209–242; sequence SLVLDYLSYAVFQLGDLHRAVELTRRLLSLDPSH. An N-linked (GlcNAc...) asparagine glycan is attached at Asn-266. A Fe2OG dioxygenase domain is found at 414-522; sequence TAELLQVANY…KWVSNKWFHE (109 aa). The Fe cation site is built by His-432 and Asp-434. The residue at position 482 (Lys-482) is an N6-succinyllysine. Position 503 (His-503) interacts with Fe cation. Residue Lys-513 participates in 2-oxoglutarate binding.

Belongs to the P4HA family. As to quaternary structure, heterotetramer of two alpha-2 chains and two beta chains (P4HB) (the beta chain is the multi-functional PDI), where P4HB plays the role of a structural subunit; this tetramer catalyzes the formation of 4-hydroxyproline in collagen. It depends on Fe(2+) as a cofactor. L-ascorbate serves as cofactor. Expressed at least in brain, heart and lung.

The protein resides in the endoplasmic reticulum lumen. It catalyses the reaction L-prolyl-[collagen] + 2-oxoglutarate + O2 = trans-4-hydroxy-L-prolyl-[collagen] + succinate + CO2. With respect to regulation, inhibited by poly(L-proline) only at very high concentrations. In terms of biological role, catalyzes the post-translational formation of 4-hydroxyproline in -Xaa-Pro-Gly- sequences in collagens and other proteins. The chain is Prolyl 4-hydroxylase subunit alpha-2 (P4ha2) from Mus musculus (Mouse).